The primary structure comprises 152 residues: SsrA-binding protein (152 aa).

Belongs to the SmpB family.

The protein resides in the cytoplasm. Required for rescue of stalled ribosomes mediated by trans-translation. Binds to transfer-messenger RNA (tmRNA), required for stable association of tmRNA with ribosomes. tmRNA and SmpB together mimic tRNA shape, replacing the anticodon stem-loop with SmpB. tmRNA is encoded by the ssrA gene; the 2 termini fold to resemble tRNA(Ala) and it encodes a 'tag peptide', a short internal open reading frame. During trans-translation Ala-aminoacylated tmRNA acts like a tRNA, entering the A-site of stalled ribosomes, displacing the stalled mRNA. The ribosome then switches to translate the ORF on the tmRNA; the nascent peptide is terminated with the 'tag peptide' encoded by the tmRNA and targeted for degradation. The ribosome is freed to recommence translation, which seems to be the essential function of trans-translation. The protein is SsrA-binding protein of Rickettsia conorii (strain ATCC VR-613 / Malish 7).